We begin with the raw amino-acid sequence, 139 residues long: Large-conductance mechanosensitive channel (139 aa).

Helical transmembrane passes span 16–36 (VIDLAVGVIIGAAFGKIVDSL) and 83–103 (GQFINTTIDFLIIAFAIFVAV).

It belongs to the MscL family. As to quaternary structure, homopentamer.

It localises to the cell inner membrane. Its function is as follows. Channel that opens in response to stretch forces in the membrane lipid bilayer. May participate in the regulation of osmotic pressure changes within the cell. In Aromatoleum aromaticum (strain DSM 19018 / LMG 30748 / EbN1) (Azoarcus sp. (strain EbN1)), this protein is Large-conductance mechanosensitive channel.